The sequence spans 189 residues: Transcription factor FapR (189 aa).

Belongs to the FapR family.

Its function is as follows. Transcriptional factor involved in regulation of membrane lipid biosynthesis by repressing genes involved in fatty acid and phospholipid metabolism. The chain is Transcription factor FapR from Exiguobacterium sibiricum (strain DSM 17290 / CCUG 55495 / CIP 109462 / JCM 13490 / 255-15).